The primary structure comprises 360 residues: Phospho-N-acetylmuramoyl-pentapeptide-transferase (360 aa).

10 helical membrane-spanning segments follow: residues 27–47, 71–91, 93–113, 128–148, 168–188, 199–219, 239–259, 262–282, 288–308, and 337–357; these read GAMI…INSL, TPTM…LLWA, LASV…AIGF, FSGK…AFTI, LVIN…VGAG, GLAI…AYLS, LAVV…FNAP, AIFM…TVAV, IVLA…IIQV, and QVVI…LSTL.

This sequence belongs to the glycosyltransferase 4 family. MraY subfamily. Mg(2+) is required as a cofactor.

It is found in the cell inner membrane. The enzyme catalyses UDP-N-acetyl-alpha-D-muramoyl-L-alanyl-gamma-D-glutamyl-meso-2,6-diaminopimeloyl-D-alanyl-D-alanine + di-trans,octa-cis-undecaprenyl phosphate = di-trans,octa-cis-undecaprenyl diphospho-N-acetyl-alpha-D-muramoyl-L-alanyl-D-glutamyl-meso-2,6-diaminopimeloyl-D-alanyl-D-alanine + UMP. It functions in the pathway cell wall biogenesis; peptidoglycan biosynthesis. Catalyzes the initial step of the lipid cycle reactions in the biosynthesis of the cell wall peptidoglycan: transfers peptidoglycan precursor phospho-MurNAc-pentapeptide from UDP-MurNAc-pentapeptide onto the lipid carrier undecaprenyl phosphate, yielding undecaprenyl-pyrophosphoryl-MurNAc-pentapeptide, known as lipid I. This chain is Phospho-N-acetylmuramoyl-pentapeptide-transferase, found in Brucella ovis (strain ATCC 25840 / 63/290 / NCTC 10512).